The chain runs to 534 residues: MKLTLWTYEGPPHVGAMRVATGMTGMHYVLHAPQGDTYADLLFTMIERRGKRPPVSYTTFQARDLGSDTAELFQSACRDAYERFQPQAIMVGSSCTAELIQDDTGGLADALSLPVPVVHLELPSYQRKENFGADESFLQICRKLARPMERTEKVSCNLLGPTALGFRHRDDILEVTRLLEGMGIAVNAVAPMGASPADIARLGAAHFNVLLYPETGESAARWAEKTLKQPYTKTVPIGVGATRDFVAEVAALAGVAPVADDSRLRQPWWSASVDSTYLTGKRVFLFGDATHVIAAARVARDEMGFEVVGMGCYNREFARPMRAAAKGYGLEALVTDDYLEVEEAIQALAPELILGTQMERHIAKRLGIPCAVISAPVHVQDFPARYSPQMGFEGANVLFDTWIHPLTMGLEEHLLTMFREDFEFHDEAGPSHHGGKAVPASAPRADEAAEALPLTGAETAEGGSIPPEAVPPAEAAEAPAGEIVWLTDAERELKKIPFFVRGKARRNTEKFAAEKGLTRISLETLYEAKAHYAR.

Residue aspartate 36 coordinates [4Fe-4S] cluster. Aspartate 274 acts as the Proton donor in catalysis. Glycine 409–leucine 410 is a substrate binding site. The tract at residues aspartate 426–aspartate 446 is disordered.

The protein belongs to the ChlB/BchB/BchZ family. As to quaternary structure, protochlorophyllide reductase is composed of three subunits; BchL, BchN and BchB. Forms a heterotetramer of two BchB and two BchN subunits. The cofactor is [4Fe-4S] cluster.

It catalyses the reaction chlorophyllide a + oxidized 2[4Fe-4S]-[ferredoxin] + 2 ADP + 2 phosphate = protochlorophyllide a + reduced 2[4Fe-4S]-[ferredoxin] + 2 ATP + 2 H2O. Its pathway is porphyrin-containing compound metabolism; bacteriochlorophyll biosynthesis (light-independent). Its function is as follows. Component of the dark-operative protochlorophyllide reductase (DPOR) that uses Mg-ATP and reduced ferredoxin to reduce ring D of protochlorophyllide (Pchlide) to form chlorophyllide a (Chlide). This reaction is light-independent. The NB-protein (BchN-BchB) is the catalytic component of the complex. The sequence is that of Light-independent protochlorophyllide reductase subunit B from Cereibacter sphaeroides (strain ATCC 17029 / ATH 2.4.9) (Rhodobacter sphaeroides).